A 1343-amino-acid polypeptide reads, in one-letter code: Kinesin-like protein KIF7 (1343 aa).

The region spanning 15–349 is the Kinesin motor domain; the sequence is PVRVALRVRP…LNYASRAQNI (335 aa). 94-101 lines the ATP pocket; the sequence is GQTGSGKT. Disordered regions lie at residues 356–382, 451–483, and 611–639; these read NWRPEAERPPEETASGARGPPRHRSET, RSALSSASGPDSGIESASVEDQAAQGAGGRKED, and EVNRLGSGSSAASEEEEEEEEPPRRTLHL. Residues 358–479 form an interaction with DLG5 region; sequence RPEAERPPEE…EDQAAQGAGG (122 aa). The interaction with SMO stretch occupies residues 358–1206; sequence RPEAERPPEE…LGRYMWINQE (849 aa). A coiled-coil region spans residues 480 to 542; the sequence is RKEDEGAQQL…ELRLRLELVR (63 aa). A sufficient for interaction with NPHP1 region spans residues 513–775; sequence AMEQYKLQSD…LRELEGKELQ (263 aa). 2 coiled-coil regions span residues 698-1057 and 1109-1211; these read ASEW…AAIE and TLRE…KQKL. Serine 898 bears the Phosphoserine mark. Disordered regions lie at residues 1219-1238 and 1310-1343; these read HSRGGEKRSLCSEGRQAPGN and GEAGLPWNFGPLSKPRRELRRASPGMIDVRKNPL.

Belongs to the TRAFAC class myosin-kinesin ATPase superfamily. Kinesin family. KIF27 subfamily. As to quaternary structure, can form homodimers and interacts with microtubules. Interacts with GLI1, GLI2, GLI3, SMO and SUFU. Interacts with NPHP1. Interacts with SMO and DLG5 (via PDZ4 or guanylate kinase-like domain). Post-translationally, polyubiquitinated by UBR3. As to expression, embryonic stem cells, melanotic melanoma and Jurkat T-cells. Expressed in heart, lung, liver, kidney, testis, retina, placenta, pancreas, colon, small intestin, prostate and thymus.

The protein localises to the cell projection. The protein resides in the cilium. It is found in the cytoplasm. Its subcellular location is the cytoskeleton. It localises to the cilium basal body. Essential for hedgehog signaling regulation: acts both as a negative and positive regulator of sonic hedgehog (Shh) and Indian hedgehog (Ihh) pathways, acting downstream of SMO, through both SUFU-dependent and -independent mechanisms. Involved in the regulation of microtubular dynamics. Required for proper organization of the ciliary tip and control of ciliary localization of SUFU-GLI2 complexes. Required for localization of GLI3 to cilia in response to Shh. Negatively regulates Shh signaling by preventing inappropriate activation of the transcriptional activator GLI2 in the absence of ligand. Positively regulates Shh signaling by preventing the processing of the transcription factor GLI3 into its repressor form. In keratinocytes, promotes the dissociation of SUFU-GLI2 complexes, GLI2 nuclear translocation and Shh signaling activation. Involved in the regulation of epidermal differentiation and chondrocyte development. This chain is Kinesin-like protein KIF7 (KIF7), found in Homo sapiens (Human).